The chain runs to 420 residues: LanC-like protein 3 (420 aa).

Belongs to the LanC-like protein family.

The polypeptide is LanC-like protein 3 (Lancl3) (Mus musculus (Mouse)).